The primary structure comprises 714 residues: MEMASVFTLNVRLDNIAIITIDVPGEKMNTLKAEFASQVRAIIKQLRENKELRGVVFVSAKPDNFIAGADINMIGNCKTAQEAEALARQGQQLMAEIHALPIPVIAAIHGACLGGGLELALACHGRVCTDDPKTVLGLPEVQLGLLPGSGGTQRLPRLIGVSTALEMILTGKQLRAKQALKLGLVDDVVPHSILLEVAVELAKKDRPSSRPLPVRERILAGPLGRALLFKMVGKKTEHKTQGNYPATERILEVVETGLAQGTSSGYDAEARAFGELAMTPQSQALRSIFFASTEVKKDPGSDAPPAPLNSVGILGGGLMGGGIAYVTACKAGLPVRIKDINPQGINHALKYSWDQLEGKVRRRHLKASERDKQLALISGTTDYRGFAHRDLIIEAVFENLELKQQMVAEVEQNCAAHTIFASNTSSLPIGDIAAHATRPEQVIGLHFFSPVEKMPLVEIIPHAGTSAQTIATTVKLAKKQGKTPIVVRDKAGFYVNRILAPYINEAIRMLTEGERVEHIDAALVKFGFPVGPIQLLDEVGIDTGTKIIPVLEAAYGERFSAPANVVSSILNDDRKGRKNGRGFYLYGQKGRKSKKQVDPAIYPLIGAQGQGRLSAPQVAERCVMLMLNEAVRCVDEQVIRSVRDGDIGAVFGIGFPPFLGGPFRYIDSLGAGEVVAIMQRLATQYGSRFTPCERLVEMGARGESFWKTTATDLQ.

Residues 1–190 (MEMASVFTLN…KLGLVDDVVP (190 aa)) form an enoyl-CoA hydratase region. The tract at residues 306-714 (APLNSVGILG…FWKTTATDLQ (409 aa)) is 3-hydroxyacyl-CoA dehydrogenase.

It in the N-terminal section; belongs to the enoyl-CoA hydratase/isomerase family. The protein in the central section; belongs to the 3-hydroxyacyl-CoA dehydrogenase family. In terms of assembly, heterotetramer of two alpha chains (FadJ) and two beta chains (FadI).

It is found in the cytoplasm. It catalyses the reaction a (3S)-3-hydroxyacyl-CoA = a (2E)-enoyl-CoA + H2O. The enzyme catalyses a 4-saturated-(3S)-3-hydroxyacyl-CoA = a (3E)-enoyl-CoA + H2O. The catalysed reaction is a (3S)-3-hydroxyacyl-CoA + NAD(+) = a 3-oxoacyl-CoA + NADH + H(+). It carries out the reaction (3S)-3-hydroxybutanoyl-CoA = (3R)-3-hydroxybutanoyl-CoA. It functions in the pathway lipid metabolism; fatty acid beta-oxidation. In terms of biological role, catalyzes the formation of a hydroxyacyl-CoA by addition of water on enoyl-CoA. Also exhibits 3-hydroxyacyl-CoA epimerase and 3-hydroxyacyl-CoA dehydrogenase activities. This is Fatty acid oxidation complex subunit alpha from Escherichia coli O139:H28 (strain E24377A / ETEC).